The following is a 204-amino-acid chain: Small ribosomal subunit protein uS4 (204 aa).

In terms of domain architecture, S4 RNA-binding spans S93–E156.

This sequence belongs to the universal ribosomal protein uS4 family. Part of the 30S ribosomal subunit. Contacts protein S5. The interaction surface between S4 and S5 is involved in control of translational fidelity.

In terms of biological role, one of the primary rRNA binding proteins, it binds directly to 16S rRNA where it nucleates assembly of the body of the 30S subunit. Its function is as follows. With S5 and S12 plays an important role in translational accuracy. The polypeptide is Small ribosomal subunit protein uS4 (Wolbachia pipientis subsp. Culex pipiens (strain wPip)).